Here is a 448-residue protein sequence, read N- to C-terminus: Glutamate--tRNA ligase 1 (448 aa).

Positions Pro10–Asn20 match the 'HIGH' region motif. Residues Lys240–Arg244 carry the 'KMSKS' region motif. Lys243 is a binding site for ATP.

This sequence belongs to the class-I aminoacyl-tRNA synthetase family. Glutamate--tRNA ligase type 1 subfamily. As to quaternary structure, monomer.

It localises to the cytoplasm. It carries out the reaction tRNA(Glu) + L-glutamate + ATP = L-glutamyl-tRNA(Glu) + AMP + diphosphate. Catalyzes the attachment of glutamate to tRNA(Glu) in a two-step reaction: glutamate is first activated by ATP to form Glu-AMP and then transferred to the acceptor end of tRNA(Glu). The chain is Glutamate--tRNA ligase 1 from Rickettsia typhi (strain ATCC VR-144 / Wilmington).